The primary structure comprises 393 residues: Acetate kinase (393 aa).

Asparagine 7 lines the Mg(2+) pocket. Residue lysine 14 participates in ATP binding. Arginine 90 serves as a coordination point for substrate. Aspartate 147 (proton donor/acceptor) is an active-site residue. ATP-binding positions include 205 to 209, 280 to 282, and 328 to 332; these read HLGNG, DFR, and GIGEN. Position 380 (glutamate 380) interacts with Mg(2+).

Belongs to the acetokinase family. In terms of assembly, homodimer. Mg(2+) serves as cofactor. Requires Mn(2+) as cofactor.

The protein localises to the cytoplasm. It carries out the reaction acetate + ATP = acetyl phosphate + ADP. It functions in the pathway metabolic intermediate biosynthesis; acetyl-CoA biosynthesis; acetyl-CoA from acetate: step 1/2. Catalyzes the formation of acetyl phosphate from acetate and ATP. Can also catalyze the reverse reaction. The sequence is that of Acetate kinase from Finegoldia magna (strain ATCC 29328 / DSM 20472 / WAL 2508) (Peptostreptococcus magnus).